Reading from the N-terminus, the 590-residue chain is Aspartate--tRNA ligase (590 aa).

Residue E174 participates in L-aspartate binding. Residues 198-201 (QLMK) are aspartate. Residue R220 participates in L-aspartate binding. Residues 220–222 (RDE) and Q229 each bind ATP. H443 contributes to the L-aspartate binding site. E484 serves as a coordination point for ATP. Residue R491 coordinates L-aspartate. 536 to 539 (GLDR) is an ATP binding site.

This sequence belongs to the class-II aminoacyl-tRNA synthetase family. Type 1 subfamily. Homodimer.

The protein localises to the cytoplasm. It catalyses the reaction tRNA(Asp) + L-aspartate + ATP = L-aspartyl-tRNA(Asp) + AMP + diphosphate. Its function is as follows. Catalyzes the attachment of L-aspartate to tRNA(Asp) in a two-step reaction: L-aspartate is first activated by ATP to form Asp-AMP and then transferred to the acceptor end of tRNA(Asp). In Lactococcus lactis subsp. cremoris (strain SK11), this protein is Aspartate--tRNA ligase.